Reading from the N-terminus, the 240-residue chain is Probable transcriptional regulatory protein SO_3401 (240 aa).

It belongs to the TACO1 family.

It localises to the cytoplasm. The protein is Probable transcriptional regulatory protein SO_3401 of Shewanella oneidensis (strain ATCC 700550 / JCM 31522 / CIP 106686 / LMG 19005 / NCIMB 14063 / MR-1).